Reading from the N-terminus, the 375-residue chain is Platelet-derived growth factor receptor-like protein (375 aa).

An N-terminal signal peptide occupies residues methionine 1–glycine 17. Positions valine 19–lysine 63 are disordered. Residues proline 40–proline 50 are compositionally biased toward basic residues. Positions proline 62–arginine 159 constitute an Ig-like C2-type 1 domain. Cysteine 96 and cysteine 143 form a disulfide bridge. Asparagine 219 carries N-linked (GlcNAc...) asparagine glycosylation. Positions proline 272–serine 375 constitute an Ig-like C2-type 2 domain. The cysteines at positions 293 and 357 are disulfide-linked.

Forms a complex composed of PDGFRL, TNK2 and GRB2.

It is found in the secreted. This chain is Platelet-derived growth factor receptor-like protein (Pdgfrl), found in Rattus norvegicus (Rat).